The primary structure comprises 667 residues: Probable potassium transport system protein Kup (667 aa).

Transmembrane regions (helical) follow at residues 16–36 (GFII…LYTM), 58–78 (VSLI…LIAL), 101–121 (WLII…ALTP), 146–166 (TNVI…QRFG), 167–187 (TGVI…VLGI), 221–241 (IFIL…YSDL), 253–273 (WPFV…WILA), 294–314 (VYLV…LISG), 343–363 (LYIP…VLYF), 373–393 (YGLA…YYLI), 399–419 (PLLA…FFLA), and 424–444 (FMHG…VMVI).

The protein belongs to the HAK/KUP transporter (TC 2.A.72) family.

The protein localises to the cell membrane. It catalyses the reaction K(+)(in) + H(+)(in) = K(+)(out) + H(+)(out). Transport of potassium into the cell. Likely operates as a K(+):H(+) symporter. This Streptococcus equi subsp. equi (strain 4047) protein is Probable potassium transport system protein Kup.